A 205-amino-acid polypeptide reads, in one-letter code: Adenylyl-sulfate kinase (205 aa).

31 to 38 (GLSGSGKS) is a binding site for ATP. The active-site Phosphoserine intermediate is the Ser105.

It belongs to the APS kinase family.

It catalyses the reaction adenosine 5'-phosphosulfate + ATP = 3'-phosphoadenylyl sulfate + ADP + H(+). Its pathway is sulfur metabolism; hydrogen sulfide biosynthesis; sulfite from sulfate: step 2/3. Functionally, catalyzes the synthesis of activated sulfate. In Shewanella pealeana (strain ATCC 700345 / ANG-SQ1), this protein is Adenylyl-sulfate kinase.